Here is a 252-residue protein sequence, read N- to C-terminus: Enolase-phosphatase E1 (252 aa).

Mg(2+)-binding residues include Asp-18 and Glu-20. Residues 149-150 (SS) and Lys-184 each bind substrate. Asp-209 contributes to the Mg(2+) binding site.

It belongs to the HAD-like hydrolase superfamily. MasA/MtnC family. In terms of assembly, monomer. The cofactor is Mg(2+).

It localises to the cytoplasm. Its subcellular location is the nucleus. The catalysed reaction is 5-methylsulfanyl-2,3-dioxopentyl phosphate + H2O = 1,2-dihydroxy-5-(methylsulfanyl)pent-1-en-3-one + phosphate. It functions in the pathway amino-acid biosynthesis; L-methionine biosynthesis via salvage pathway; L-methionine from S-methyl-5-thio-alpha-D-ribose 1-phosphate: step 3/6. It participates in amino-acid biosynthesis; L-methionine biosynthesis via salvage pathway; L-methionine from S-methyl-5-thio-alpha-D-ribose 1-phosphate: step 4/6. Its function is as follows. Bifunctional enzyme that catalyzes the enolization of 2,3-diketo-5-methylthiopentyl-1-phosphate (DK-MTP-1-P) into the intermediate 2-hydroxy-3-keto-5-methylthiopentenyl-1-phosphate (HK-MTPenyl-1-P), which is then dephosphorylated to form the acireductone 1,2-dihydroxy-3-keto-5-methylthiopentene (DHK-MTPene). This is Enolase-phosphatase E1 from Naegleria gruberi (Amoeba).